The sequence spans 249 residues: uncharacterized protein (249 aa).

The protein belongs to the AIM2 family.

The protein resides in the cytoplasm. The protein localises to the nucleus. This is an uncharacterized protein from Schizosaccharomyces pombe (strain 972 / ATCC 24843) (Fission yeast).